The primary structure comprises 189 residues: dCTP deaminase (189 aa).

Residues 112-117, 136-138, Gln-157, Tyr-171, and Gln-181 each bind dCTP; these read KSTYAR and TLE. Glu-138 functions as the Proton donor/acceptor in the catalytic mechanism.

The protein belongs to the dCTP deaminase family. As to quaternary structure, homotrimer.

It catalyses the reaction dCTP + H2O + H(+) = dUTP + NH4(+). It functions in the pathway pyrimidine metabolism; dUMP biosynthesis; dUMP from dCTP (dUTP route): step 1/2. In terms of biological role, catalyzes the deamination of dCTP to dUTP. This Burkholderia thailandensis (strain ATCC 700388 / DSM 13276 / CCUG 48851 / CIP 106301 / E264) protein is dCTP deaminase.